The primary structure comprises 496 residues: Glutamate--tRNA ligase (496 aa).

The 'HIGH' region motif lies at P12–N22. The 'KMSKS' region motif lies at K259–R263. K262 contacts ATP.

The protein belongs to the class-I aminoacyl-tRNA synthetase family. Glutamate--tRNA ligase type 1 subfamily. In terms of assembly, monomer.

Its subcellular location is the cytoplasm. It catalyses the reaction tRNA(Glu) + L-glutamate + ATP = L-glutamyl-tRNA(Glu) + AMP + diphosphate. Its function is as follows. Catalyzes the attachment of glutamate to tRNA(Glu) in a two-step reaction: glutamate is first activated by ATP to form Glu-AMP and then transferred to the acceptor end of tRNA(Glu). The sequence is that of Glutamate--tRNA ligase from Lactiplantibacillus plantarum (strain ATCC BAA-793 / NCIMB 8826 / WCFS1) (Lactobacillus plantarum).